The primary structure comprises 80 residues: Serine palmitoyltransferase small subunit B (80 aa).

At 1-11 the chain is on the cytoplasmic side; sequence MDVKHIKDYLS. The chain crosses the membrane as a helical span at residues 12 to 29; sequence WLYYQYLLITCSYVLEPW. Over 30-36 the chain is Lumenal; that stretch reads EQSIFNT. Residues 37–57 form a helical membrane-spanning segment; the sequence is LLLTIIAMVIYSSYIFIPIHV. Residues 58 to 80 lie on the Cytoplasmic side of the membrane; the sequence is RLAVEFFSRIFGGQHESTVALMS.

The protein belongs to the SPTSS family. SPTSSB subfamily. Component of the serine palmitoyltransferase (SPT) complex, which is composed of SPTLC1, SPTLC2 or SPTLC3 and SPTSSA or SPTSSB. The heterodimer consisting of SPTLC1 and SPTLC2/SPTLC3 forms the catalytic core of the enzyme, while SPTSSA or SPTSSB subunits determine substrate specificity. SPT also interacts with ORMDL proteins, especially ORMDL3, which negatively regulate SPT activity in the presence of ceramides.

The protein resides in the endoplasmic reticulum membrane. The protein operates within lipid metabolism; sphingolipid metabolism. Its function is as follows. Component of the serine palmitoyltransferase multisubunit enzyme (SPT) that catalyzes the initial and rate-limiting step in sphingolipid biosynthesis by condensing L-serine and activated acyl-CoA (most commonly palmitoyl-CoA) to form long-chain bases. The SPT complex is composed of SPTLC1, SPTLC2 or SPTLC3 and SPTSSA or SPTSSB. Within this complex, the heterodimer consisting of SPTLC1 and SPTLC2/SPTLC3 forms the catalytic core. Within the SPT complex, SPTSSB stimulates the catalytic activity and plays a role in substrate specificity. SPT complexes with this subunit showing a preference for longer acyl-CoAs. The SPTLC1-SPTLC2-SPTSSB complex shows a strong preference for C18-CoA substrate, while the SPTLC1-SPTLC3-SPTSSB isozyme displays an ability to use a broader range of acyl-CoAs, without apparent preference. The chain is Serine palmitoyltransferase small subunit B (sptssb) from Xenopus laevis (African clawed frog).